The primary structure comprises 183 residues: Putative manganese efflux pump MntP (183 aa).

A run of 6 helical transmembrane segments spans residues 6 to 26 (LFLI…CIGL), 40 to 60 (IYFG…GFLF), 64 to 84 (IATM…IIMI), 101 to 121 (MNII…FTAL), 135 to 155 (LFIG…SKYL), and 158 to 178 (IDVI…FFGL).

Belongs to the MntP (TC 9.B.29) family.

The protein resides in the cell membrane. In terms of biological role, probably functions as a manganese efflux pump. The sequence is that of Putative manganese efflux pump MntP from Clostridium tetani (strain Massachusetts / E88).